Consider the following 386-residue polypeptide: Synaptotagmin-5 (386 aa).

The segment covering 1 to 16 (MFPEPPTPGSPAPETP) has biased composition (pro residues). A disordered region spans residues 1 to 21 (MFPEPPTPGSPAPETPPDSSR). Topologically, residues 1-24 (MFPEPPTPGSPAPETPPDSSRIRQ) are vesicular. Residues 25–45 (GAVPAWVLATILLGSGLLVFS) form a helical membrane-spanning segment. At 46 to 386 (SCFCLYRKRC…PDRARPIPAP (341 aa)) the chain is on the cytoplasmic side. C2 domains lie at 108-227 (QLGR…QAWR) and 239-372 (KLGD…AQWH). Leucine 138, aspartate 139, aspartate 145, aspartate 197, phenylalanine 198, aspartate 199, serine 202, aspartate 205, aspartate 270, aspartate 276, aspartate 330, and aspartate 332 together coordinate Ca(2+).

The protein belongs to the synaptotagmin family. Homodimer. Interacts with both alpha- and beta-tubulin. Requires Ca(2+) as cofactor. As to expression, expressed in kidney, adipose tissue, lung and heart, as well as at higher levels in brain.

The protein localises to the cytoplasmic vesicle. The protein resides in the secretory vesicle. Its subcellular location is the synaptic vesicle membrane. It localises to the recycling endosome membrane. Functionally, may be involved in Ca(2+)-dependent exocytosis of secretory vesicles through Ca(2+) and phospholipid binding to the C2 domain or may serve as Ca(2+) sensors in the process of vesicular trafficking and exocytosis. Regulates the Ca(2+)-dependent secretion of norepinephrine in PC12 cells. Required for export from the endocytic recycling compartment to the cell surface. In Rattus norvegicus (Rat), this protein is Synaptotagmin-5 (Syt5).